Reading from the N-terminus, the 392-residue chain is DNA primase small subunit PriS (392 aa).

Active-site residues include Asp98, Asp100, and Asp295.

It belongs to the eukaryotic-type primase small subunit family. In terms of assembly, heterodimer of a small subunit (PriS) and a large subunit (PriL). Requires Mg(2+) as cofactor. The cofactor is Mn(2+).

Functionally, catalytic subunit of DNA primase, an RNA polymerase that catalyzes the synthesis of short RNA molecules used as primers for DNA polymerase during DNA replication. The small subunit contains the primase catalytic core and has DNA synthesis activity on its own. Binding to the large subunit stabilizes and modulates the activity, increasing the rate of DNA synthesis while decreasing the length of the DNA fragments, and conferring RNA synthesis capability. The DNA polymerase activity may enable DNA primase to also catalyze primer extension after primer synthesis. May also play a role in DNA repair. In Haloarcula marismortui (strain ATCC 43049 / DSM 3752 / JCM 8966 / VKM B-1809) (Halobacterium marismortui), this protein is DNA primase small subunit PriS.